Here is a 363-residue protein sequence, read N- to C-terminus: 43 kDa protein (363 aa).

This Lepidoptera (butterflies and moths) protein is 43 kDa protein (P43).